The following is a 399-amino-acid chain: MLAQSCCLRLLILLLLCKSTCSVWEKSHKYFRNRKLRERRIKWFGTKKTEIQPLLISTWNYTDANLQAWSVLQQGPQRTRMAVIQGCMACQNQRCGRLLAGGSSPDSEGTLTLEAAIMDGERLEYGAVAGMEGARNAILVADAVLRHTKHSLLVGKSATKFARSLGYKEEFLTDGRTKNVWKKWRSNGCQPNFWRDVRPSHTENCGPYTPLPEHLHQHPLHQEYAITQGQHDQLAFLALDAEGKLHVASQSSGAPFRIPGRVGDSAVPGAGIYADNKVGGAVASGDGDILMRHLPAFLAVEAMRAGKKPDQAAEWVVQRLLRHNTEFNGAVVVVNRRGIYAAACAGLDEFHFVVSGGKEYLSMARVERIKCLEREDEVVDDGPKGLFPTIPEKQAVPRG.

Residues 1-22 (MLAQSCCLRLLILLLLCKSTCS) form the signal peptide. Disulfide bonds link Cys-90-Cys-95, Cys-189-Cys-205, and Cys-344-Cys-371.

It belongs to the Ntn-hydrolase family.

This chain is L-asparaginase-like protein GG20738, found in Drosophila erecta (Fruit fly).